We begin with the raw amino-acid sequence, 156 residues long: Ribonuclease pancreatic (156 aa).

Residues 1-28 (MALEKSLVRLLLLVLILLVLGWVQPSLG) form the signal peptide. The span at 33–43 (AKKFQRQHMDS) shows a compositional bias: basic and acidic residues. A disordered region spans residues 33 to 53 (AKKFQRQHMDSDSSPSSSSTY). 2 residues coordinate substrate: K35 and R38. The active-site Proton acceptor is the H40. Disulfide bonds link C54–C112, C68–C123, C86–C138, and C93–C100. N-linked (GlcNAc...) asparagine; partial glycosylation is present at N62. Substrate is bound by residues 69-73 (KPVNT) and K94. An N-linked (GlcNAc...) asparagine glycan is attached at N104. R113 is a binding site for substrate. An N-linked (GlcNAc...) asparagine glycan is attached at N116. H147 (proton donor) is an active-site residue.

This sequence belongs to the pancreatic ribonuclease family. In terms of assembly, monomer. Interacts with and forms tight 1:1 complexes with RNH1. Dimerization of two such complexes may occur. Interaction with RNH1 inhibits this protein. In terms of processing, N-linked glycans are of complex type. As to expression, pancreas and other tissues and body fluids (indicating it may have other physiological functions besides its role in digestion).

The protein localises to the secreted. It catalyses the reaction an [RNA] containing cytidine + H2O = an [RNA]-3'-cytidine-3'-phosphate + a 5'-hydroxy-ribonucleotide-3'-[RNA].. The enzyme catalyses an [RNA] containing uridine + H2O = an [RNA]-3'-uridine-3'-phosphate + a 5'-hydroxy-ribonucleotide-3'-[RNA].. Its function is as follows. Endonuclease that catalyzes the cleavage of RNA on the 3' side of pyrimidine nucleotides. Acts on single-stranded and double-stranded RNA. This chain is Ribonuclease pancreatic (RNASE1), found in Homo sapiens (Human).